Here is a 381-residue protein sequence, read N- to C-terminus: MAIFIRKMHPLLKIMNHALVDLPAPSNISLWWNFGSLLGLCLIIQILTGLFLAMHYTADVSMAFSSVVHICRDVNYGWLIRNIHANGASLFFICVYLHIARGLYYGSYLYKETWNIGVILLFLLMATAFVGYVLPWGQMSFWGATVITNLLSAFPYIGNMLVQWIWGGFSVDNATLTRFFAFHFLLPFLILALTVIHLLFLHETGSNNPLGINSDADKISFHPYFSYKDLLGFFVMIFFLTTLALFMPNLLGDAENFIPANPLVTPPHIKPEWYFLFAYAILRSIPNKLGGVLALLFSIFILMLVPLLHTSKQRSNIFRPLTQIFFWLLVANSIILTWIGGQPVEQPFITVGQIASISYFSLFLIIMPFASWCENKILSLN.

The next 4 helical transmembrane spans lie at 34 to 54, 78 to 99, 114 to 134, and 179 to 199; these read FGSLLGLCLIIQILTGLFLAM, WLIRNIHANGASLFFICVYLHI, WNIGVILLFLLMATAFVGYVL, and FFAFHFLLPFLILALTVIHLL. Residues H84 and H98 each coordinate heme b. H183 and H197 together coordinate heme b. An a ubiquinone-binding site is contributed by H202. A run of 4 helical transmembrane segments spans residues 227-247, 289-309, 321-341, and 348-368; these read YKDLLGFFVMIFFLTTLALFM, LGGVLALLFSIFILMLVPLLH, LTQIFFWLLVANSIILTWIGG, and FITVGQIASISYFSLFLIIMP.

This sequence belongs to the cytochrome b family. The cytochrome bc1 complex contains 3 respiratory subunits (MT-CYB, CYC1 and UQCRFS1), 2 core proteins (UQCRC1 and UQCRC2) and probably 6 low-molecular weight proteins. Heme b serves as cofactor.

The protein resides in the mitochondrion inner membrane. Functionally, component of the ubiquinol-cytochrome c reductase complex (complex III or cytochrome b-c1 complex) that is part of the mitochondrial respiratory chain. The b-c1 complex mediates electron transfer from ubiquinol to cytochrome c. Contributes to the generation of a proton gradient across the mitochondrial membrane that is then used for ATP synthesis. This is Cytochrome b (mt-cyb) from Sphyrna lewini (Scalloped hammerhead shark).